A 235-amino-acid polypeptide reads, in one-letter code: Protein CIST1 (235 aa).

Residues Met1 to Ser31 form the signal peptide. Low complexity-rich tracts occupy residues Asp28–Thr61 and Ser76–Glu110. A disordered region spans residues Asp28–Thr159. At Ser32–Gly184 the chain is on the extracellular side. The N-linked (GlcNAc...) asparagine glycan is linked to Asn45. Positions His114 to Leu136 are enriched in polar residues. A helical transmembrane segment spans residues Val185 to Val205. The Cytoplasmic segment spans residues Arg206 to Pro235.

Highly expressed in large intestine, small intestine, rumen, and kidney tissues.

The protein localises to the membrane. This is Protein CIST1 (CIST1) from Bos taurus (Bovine).